Here is a 190-residue protein sequence, read N- to C-terminus: Nucleoside triphosphate pyrophosphatase (190 aa).

Asp-69 (proton acceptor) is an active-site residue.

This sequence belongs to the Maf family. A divalent metal cation is required as a cofactor.

The protein localises to the cytoplasm. The catalysed reaction is a ribonucleoside 5'-triphosphate + H2O = a ribonucleoside 5'-phosphate + diphosphate + H(+). It catalyses the reaction a 2'-deoxyribonucleoside 5'-triphosphate + H2O = a 2'-deoxyribonucleoside 5'-phosphate + diphosphate + H(+). Nucleoside triphosphate pyrophosphatase. May have a dual role in cell division arrest and in preventing the incorporation of modified nucleotides into cellular nucleic acids. The chain is Nucleoside triphosphate pyrophosphatase from Helicobacter pylori (strain G27).